Consider the following 353-residue polypeptide: Melanin-concentrating hormone receptor 1 (353 aa).

The Extracellular portion of the chain corresponds to 1–45 (MDLQASLLSTGPNASNISDGQDNFTLAGPPPRTRSVSYINIIMPS). N-linked (GlcNAc...) asparagine glycans are attached at residues Asn-13, Asn-16, and Asn-23. The helical transmembrane segment at 46–66 (VFGTICLLGIVGNSTVIFAVV) threads the bilayer. The Cytoplasmic portion of the chain corresponds to 67–79 (KKSKLHWCSNVPD). A helical transmembrane segment spans residues 80–100 (IFIINLSVVDLLFLLGMPFMI). The Extracellular segment spans residues 101–116 (HQLMGNGVWHFGETMC). Cys-116 and Cys-194 are oxidised to a cystine. Residues 117 to 139 (TLITAMDANSQFTSTYILTAMAI) traverse the membrane as a helical segment. The Cytoplasmic portion of the chain corresponds to 140 to 161 (DRYLATVHPISSTKFRKPSMAT). Residues 162-182 (LVICLLWALSFISITPVWLYA) traverse the membrane as a helical segment. At 183–204 (RLIPFPGGAVGCGIRLPNPDTD) the chain is on the extracellular side. A helical transmembrane segment spans residues 205–225 (LYWFTLYQFFLAFALPFVVIT). At 226-256 (AAYVKILQRMTSSVAPASQRSIRLRTKRVTR) the chain is on the cytoplasmic side. Residues 257 to 277 (TAIAICLVFFVCWAPYYVLQL) form a helical membrane-spanning segment. The Extracellular portion of the chain corresponds to 278–294 (TQLSISRPTLTFVYLYN). Residues 295–315 (AAISLGYANSCLNPFVYIVLC) form a helical membrane-spanning segment. Residues 316–353 (ETFRKRLVLSVKPAAQGQLRTVSNAQTADEERTESKGT) are Cytoplasmic-facing.

It belongs to the G-protein coupled receptor 1 family. As to quaternary structure, interacts with NCDN. As to expression, expressed predominantly in the brain. Expression in brain is negatively regulated by leptin. Also found in the epithelium of the tongue and kidney.

The protein resides in the cell membrane. In terms of biological role, receptor for melanin-concentrating hormone, coupled to both G proteins that inhibit adenylyl cyclase and G proteins that activate phosphoinositide hydrolysis. The protein is Melanin-concentrating hormone receptor 1 of Mus musculus (Mouse).